Here is a 763-residue protein sequence, read N- to C-terminus: Protein translocase subunit SecA 2 (763 aa).

ATP contacts are provided by residues glutamine 83, 101-105 (GEGKT), and aspartate 490.

It belongs to the SecA family. Monomer and homodimer. Part of the essential Sec protein translocation apparatus which comprises SecA, SecYEG and auxiliary proteins SecDF. Other proteins may also be involved.

It is found in the cell membrane. Its subcellular location is the cytoplasm. The enzyme catalyses ATP + H2O + cellular proteinSide 1 = ADP + phosphate + cellular proteinSide 2.. In terms of biological role, part of the Sec protein translocase complex. Interacts with the SecYEG preprotein conducting channel. Has a central role in coupling the hydrolysis of ATP to the transfer of proteins into and across the cell membrane, serving as an ATP-driven molecular motor driving the stepwise translocation of polypeptide chains across the membrane. The chain is Protein translocase subunit SecA 2 from Corynebacterium efficiens (strain DSM 44549 / YS-314 / AJ 12310 / JCM 11189 / NBRC 100395).